The chain runs to 562 residues: Solute carrier family 22 member 6 (562 aa).

At 1–15 the chain is on the cytoplasmic side; that stretch reads MPFSELLEQVGSTGR. A helical transmembrane segment spans residues 16-36; the sequence is FQVLHVTLLCIPVLMMASHNL. Residues 37-147 lie on the Extracellular side of the membrane; that stretch reads LQNFVATVPS…LVCDMHSFKQ (111 aa). A helical membrane pass occupies residues 148–168; it reads MGQTIYMGGVLVGALLFGGLS. The Cytoplasmic segment spans residues 169 to 174; it reads DRYGRR. The chain crosses the membrane as a helical span at residues 175–195; the sequence is ILLLISNLLMAVSGTCAAFSS. Residues 196 to 205 are Extracellular-facing; the sequence is SFSLFCVFRF. A helical membrane pass occupies residues 206–226; sequence GCGLALSGLGLNTFSLIVEWI. Residues 227–235 are Cytoplasmic-facing; it reads PTRIRTAVG. The helical transmembrane segment at 236-256 threads the bilayer; it reads TTTGYCYTLGQLILVLLAYFI. At 257–260 the chain is on the extracellular side; sequence RDWR. Residues 261 to 281 form a helical membrane-spanning segment; the sequence is WLTLAVSLPFYVFFLIAWWFH. At 282-351 the chain is on the cytoplasmic side; the sequence is ESSRWLALSN…FNTPAMRKRT (70 aa). The chain crosses the membrane as a helical span at residues 352–372; it reads LCLSAVWLSTSFAYYGLAMDL. Over 373-378 the chain is Extracellular; sequence DKFGVD. Residues 379-399 form a helical membrane-spanning segment; that stretch reads IYLIQVIFGAVDIPAKVVVVV. Residues 400–408 are Cytoplasmic-facing; it reads SMSLIGRRR. Residues 409-429 form a helical membrane-spanning segment; the sequence is SQCAVLVVAGITILLNLLVPY. Residues 430–444 lie on the Extracellular side of the membrane; it reads DKQTIRTCLAVLGKG. A helical transmembrane segment spans residues 445-465; it reads CLAASFNCCYLYSGELFPTII. Over 466–468 the chain is Cytoplasmic; it reads RQN. The helical transmembrane segment at 469-489 threads the bilayer; sequence GMGWVSMMARIGAMVAPMVLL. The Extracellular segment spans residues 490–495; that stretch reads TRDYIP. Residues 496–516 traverse the membrane as a helical segment; it reads WLPGLIYGGAPILSGLAAIFL. Topologically, residues 517–562 are cytoplasmic; that stretch reads PETLGYPLPDTIQDVEESGSGRKSKMSTKETITLQDKQANLLKQSA.

It belongs to the major facilitator (TC 2.A.1) superfamily. Organic cation transporter (TC 2.A.1.19) family. Glycosylated. Glycosylation is necessary for proper targeting of the transporter to the plasma membrane.

It is found in the cell membrane. The protein resides in the basolateral cell membrane. The protein localises to the basal cell membrane. In terms of biological role, involved in the renal elimination of endogenous and exogenous organic anions. Functions as organic anion exchanger when the uptake of one molecule of organic anion is coupled with an efflux of one molecule of endogenous dicarboxylic acid (glutarate, ketoglutarate, etc). Mediates the sodium-independent uptake of p-aminohippurate (PAH), 2,3-dimercapto-1-propanesulfonic acid (DMPS), cidofovir, adefovir, 9-(2-phosphonylmethoxyethyl) guanine (PMEG), 9-(2-phosphonylmethoxyethyl) diaminopurine (PMEDAP), ochratoxin (OTA), acyclovir (ACV), 3'-azido-3-'deoxythymidine (AZT), cimetidine (CMD), 2,4-dichloro-phenoxyacetate (2,4-D), hippurate (HA), indoleacetate (IA), indoxyl sulfate (IS), 3-carboxy-4-methyl-5-propyl-2-furanpropionate (CMPF) and edaravone sulfate. Mediates the sodium-independent uptake of p-aminohippurate (PAH). PAH uptake is inhibited by p-chloromercuribenzenesulphonate (PCMBS), diethyl pyrocarbonate (DEPC), indomethacin, sulindac, diclofenac, carprofen, okadaic acid, benzothiazolylcysteine (BTC), S-chlorotrifluoroethylcysteine (CTFC), cysteine S-conjugates S-dichlorovinylcysteine (DCVC), furosemide, steviol, phorbol 12-myristate 13-acetate (PMA), calcium ionophore A23187, benzylpenicillin, bumetamide, losartan, probenecid, phenol red, urate, glutarate and alpha-ketoglutarate. PAH uptake is inhibited by glutarate. The protein is Solute carrier family 22 member 6 (SLC22A6) of Pseudopleuronectes americanus (Winter flounder).